Consider the following 528-residue polypeptide: Glycerol kinase 5 (528 aa).

ATP contacts are provided by serine 28 and serine 29. Glycerol contacts are provided by arginine 98, aspartate 275, and glutamine 276. ATP-binding residues include threonine 297, glycine 340, and glycine 440.

The protein belongs to the FGGY kinase family.

The protein localises to the cytoplasm. It catalyses the reaction glycerol + ATP = sn-glycerol 3-phosphate + ADP + H(+). It functions in the pathway polyol metabolism; glycerol degradation via glycerol kinase pathway; sn-glycerol 3-phosphate from glycerol: step 1/1. Its function is as follows. Skin-specific kinase that plays a key role in glycerol metabolism, catalyzing its phosphorylation to produce sn-glycerol 3-phosphate. Involved in skin-specific regulation of sterol regulatory element-binding protein (SREBP) processing and lipid biosynthesis. The polypeptide is Glycerol kinase 5 (GK5) (Bos taurus (Bovine)).